The following is a 359-amino-acid chain: Peptide chain release factor 1 (359 aa).

An N5-methylglutamine modification is found at glutamine 236. Residues 286–305 (KKEMERSTMRKSQIGSGDRS) are disordered.

This sequence belongs to the prokaryotic/mitochondrial release factor family. In terms of processing, methylated by PrmC. Methylation increases the termination efficiency of RF1.

The protein localises to the cytoplasm. Functionally, peptide chain release factor 1 directs the termination of translation in response to the peptide chain termination codons UAG and UAA. The protein is Peptide chain release factor 1 of Wolbachia pipientis wMel.